Consider the following 271-residue polypeptide: Ribosomal RNA small subunit methyltransferase A (271 aa).

Residues asparagine 28, leucine 30, glycine 54, glutamate 75, aspartate 99, and asparagine 117 each coordinate S-adenosyl-L-methionine.

It belongs to the class I-like SAM-binding methyltransferase superfamily. rRNA adenine N(6)-methyltransferase family. RsmA subfamily.

It localises to the cytoplasm. It catalyses the reaction adenosine(1518)/adenosine(1519) in 16S rRNA + 4 S-adenosyl-L-methionine = N(6)-dimethyladenosine(1518)/N(6)-dimethyladenosine(1519) in 16S rRNA + 4 S-adenosyl-L-homocysteine + 4 H(+). Functionally, specifically dimethylates two adjacent adenosines (A1518 and A1519) in the loop of a conserved hairpin near the 3'-end of 16S rRNA in the 30S particle. May play a critical role in biogenesis of 30S subunits. The sequence is that of Ribosomal RNA small subunit methyltransferase A from Thermus thermophilus (strain ATCC 27634 / DSM 579 / HB8).